The chain runs to 307 residues: Transposase InsD for insertion element IS2-9 (307 aa).

An Integrase catalytic domain is found at 112 to 295 (KPAVPPSKRA…SPREYLRQRA (184 aa)).

In terms of biological role, involved in the transposition of the insertion sequence IS2. The chain is Transposase InsD for insertion element IS2-9 from Escherichia coli (strain K12).